The chain runs to 99 residues: Small ribosomal subunit protein cS23 (99 aa).

This sequence belongs to the chloroplast-specific ribosomal protein cS23 family. As to quaternary structure, part of the 30S ribosomal subunit.

Its subcellular location is the plastid. The protein resides in the chloroplast. Probably a ribosomal protein or a ribosome-associated protein. In Gracilaria tenuistipitata var. liui (Red alga), this protein is Small ribosomal subunit protein cS23.